The primary structure comprises 98 residues: Aspartyl/glutamyl-tRNA(Asn/Gln) amidotransferase subunit C (98 aa).

This sequence belongs to the GatC family. In terms of assembly, heterotrimer of A, B and C subunits.

It catalyses the reaction L-glutamyl-tRNA(Gln) + L-glutamine + ATP + H2O = L-glutaminyl-tRNA(Gln) + L-glutamate + ADP + phosphate + H(+). The enzyme catalyses L-aspartyl-tRNA(Asn) + L-glutamine + ATP + H2O = L-asparaginyl-tRNA(Asn) + L-glutamate + ADP + phosphate + 2 H(+). Allows the formation of correctly charged Asn-tRNA(Asn) or Gln-tRNA(Gln) through the transamidation of misacylated Asp-tRNA(Asn) or Glu-tRNA(Gln) in organisms which lack either or both of asparaginyl-tRNA or glutaminyl-tRNA synthetases. The reaction takes place in the presence of glutamine and ATP through an activated phospho-Asp-tRNA(Asn) or phospho-Glu-tRNA(Gln). The sequence is that of Aspartyl/glutamyl-tRNA(Asn/Gln) amidotransferase subunit C from Gloeothece citriformis (strain PCC 7424) (Cyanothece sp. (strain PCC 7424)).